A 227-amino-acid polypeptide reads, in one-letter code: Flagellar L-ring protein 2 (227 aa).

A signal peptide spans 1–17 (MKSKLAITMVSALLLAA). Residue C18 is the site of N-palmitoyl cysteine attachment. C18 is lipidated: S-diacylglycerol cysteine.

It belongs to the FlgH family. As to quaternary structure, the basal body constitutes a major portion of the flagellar organelle and consists of four rings (L,P,S, and M) mounted on a central rod.

The protein localises to the cell outer membrane. It is found in the bacterial flagellum basal body. Assembles around the rod to form the L-ring and probably protects the motor/basal body from shearing forces during rotation. The polypeptide is Flagellar L-ring protein 2 (Chromobacterium violaceum (strain ATCC 12472 / DSM 30191 / JCM 1249 / CCUG 213 / NBRC 12614 / NCIMB 9131 / NCTC 9757 / MK)).